Here is an 88-residue protein sequence, read N- to C-terminus: Augerpeptide Hhe9a (88 aa).

The N-terminal stretch at 1–21 is a signal peptide; it reads MMTKTGLVLLFAFLLVFPVSS. Positions 22 to 49 are excised as a propeptide; that stretch reads LPMDAEAGHARLEMDKRDAGNEAWTRLL. 3 cysteine pairs are disulfide-bonded: Cys-56–Cys-71, Cys-61–Cys-73, and Cys-67–Cys-86.

Expressed by the venom duct.

It is found in the secreted. The sequence is that of Augerpeptide Hhe9a from Hastula hectica (Sea snail).